Here is a 412-residue protein sequence, read N- to C-terminus: MNAEIIAVGTELLLGQIANTNAQFLSEKLASIGINVYYHTVVGDNNKRLQQAIEVAEERADMLIFTGGLGPTKDDLTKETIASSLEEKLVYDENALALISNYFKRTGREFTENNKKQALVLNGGTVFANDHGMAPGMGLNKNGKVYILLPGPPKEMKPMYVSYVEPFLRNFTTGENIYSRVLRFFGIGESQLEVKVQDLIDGQTNPTIAPLANDGEVTLRLTAKHQNVHEAEKLIQHVEDLILERVGEFFYGYDQEFLHYKAIELLKKKGLTLACAESLTGGLFGNQVTENAGVSSVFKGGVICYHNDVKQHVLHVPEEVLSTDGAVSKECARYLAENVRELLKADIGISFTGVAGPDASEHKEPGTVFVGLAIKDEPTVVFPLNLSGSRQQIRERSAKYGFYHLYKKLEEI.

It belongs to the CinA family.

This chain is Putative competence-damage inducible protein, found in Bacillus cereus (strain Q1).